Here is a 149-residue protein sequence, read N- to C-terminus: Deoxyuridine 5'-triphosphate nucleotidohydrolase (149 aa).

Substrate contacts are provided by residues 68–70, Asn-81, 85–87, and Met-95; these read RSG and LID.

The protein belongs to the dUTPase family. Requires Mg(2+) as cofactor.

The enzyme catalyses dUTP + H2O = dUMP + diphosphate + H(+). It functions in the pathway pyrimidine metabolism; dUMP biosynthesis; dUMP from dCTP (dUTP route): step 2/2. Its function is as follows. This enzyme is involved in nucleotide metabolism: it produces dUMP, the immediate precursor of thymidine nucleotides and it decreases the intracellular concentration of dUTP so that uracil cannot be incorporated into DNA. This is Deoxyuridine 5'-triphosphate nucleotidohydrolase from Methylibium petroleiphilum (strain ATCC BAA-1232 / LMG 22953 / PM1).